Consider the following 251-residue polypeptide: Geranylgeranylglyceryl phosphate synthase (251 aa).

2 residues coordinate Mg(2+): Asp25 and Ser54. Residues Tyr173–Gly179, Gly204–Gly205, and Gly226–Thr227 contribute to the sn-glycerol 1-phosphate site.

It belongs to the GGGP/HepGP synthase family. Group II subfamily. The cofactor is Mg(2+).

Its subcellular location is the cytoplasm. It catalyses the reaction sn-glycerol 1-phosphate + (2E,6E,10E)-geranylgeranyl diphosphate = sn-3-O-(geranylgeranyl)glycerol 1-phosphate + diphosphate. It functions in the pathway membrane lipid metabolism; glycerophospholipid metabolism. Prenyltransferase that catalyzes the transfer of the geranylgeranyl moiety of geranylgeranyl diphosphate (GGPP) to the C3 hydroxyl of sn-glycerol-1-phosphate (G1P). This reaction is the first ether-bond-formation step in the biosynthesis of archaeal membrane lipids. The chain is Geranylgeranylglyceryl phosphate synthase from Pyrococcus furiosus (strain ATCC 43587 / DSM 3638 / JCM 8422 / Vc1).